We begin with the raw amino-acid sequence, 1860 residues long: Probable helicase with zinc finger domain (1860 aa).

A C3H1-type zinc finger spans residues 168-196 (SEEYTLCKRFLEQGLCRYGAQCTSAHSQE). 661-668 (GPYGTGKT) is an ATP binding site. The DEAA box signature appears at 787–790 (DEAA). Disordered stretches follow at residues 1106–1136 (RSQH…TEPF), 1158–1177 (TPPG…VQRL), 1286–1317 (ERKA…GFPA), 1556–1604 (IQPR…PPDH), 1641–1709 (RQDP…RYPS), and 1749–1860 (MSEE…TYFK). A compositionally biased stretch (low complexity) spans 1107–1116 (SQHPPQQGPG). Residues 1286–1298 (ERKAPELKEKQGD) are compositionally biased toward basic and acidic residues. A compositionally biased stretch (polar residues) spans 1301 to 1313 (SVQNKSPEPQSNM). A compositionally biased stretch (low complexity) spans 1641-1660 (RQDPGPLQHQQQKQQLQAPQ). Pro residues-rich tracts occupy residues 1760–1769 (QPPPPPPPHP) and 1783–1794 (PLLPSKQTPPDP). Positions 1847–1860 (GSSNSSNGYYTYFK) are enriched in low complexity.

The protein belongs to the DNA2/NAM7 helicase family.

The protein localises to the nucleus. May act as a helicase. This is Probable helicase with zinc finger domain (helz) from Danio rerio (Zebrafish).